Reading from the N-terminus, the 415-residue chain is Homoserine O-acetyltransferase (415 aa).

The region spanning 47–369 (NAVLVCHGLT…HGHDAFLVEP (323 aa)) is the AB hydrolase-1 domain. The Nucleophile role is filled by Ser155. Arg226 is a substrate binding site. Residues Asp329 and His362 contribute to the active site. Asp363 contacts substrate. The segment at 387–415 (RAVTDTATDGGEPDEEKDFAPVHSSLFSR) is disordered.

This sequence belongs to the AB hydrolase superfamily. MetX family. In terms of assembly, homodimer.

The protein resides in the cytoplasm. It catalyses the reaction L-homoserine + acetyl-CoA = O-acetyl-L-homoserine + CoA. Its pathway is amino-acid biosynthesis; L-methionine biosynthesis via de novo pathway; O-acetyl-L-homoserine from L-homoserine: step 1/1. In terms of biological role, transfers an acetyl group from acetyl-CoA to L-homoserine, forming acetyl-L-homoserine. The chain is Homoserine O-acetyltransferase from Haloferax gibbonsii (strain ATCC 33959 / DSM 4427 / JCM 8863 / NBRC 102184 / NCIMB 2188 / Ma 2.38).